Consider the following 175-residue polypeptide: Thioredoxin-like protein CITRX, chloroplastic (175 aa).

The N-terminal 64 residues, Met-1–Arg-64, are a transit peptide targeting the chloroplast. Residues Ala-74–Leu-175 form the Thioredoxin domain. Active-site nucleophile residues include Cys-98 and Cys-101. A disulfide bridge connects residues Cys-98 and Cys-101.

This sequence belongs to the thioredoxin family. Plant CITRX-type subfamily. As to quaternary structure, interacts with Cf-9 resistance protein.

The protein resides in the plastid. It is found in the chloroplast. In terms of biological role, probable thiol-disulfide oxidoreductase that may play a role in proper chloroplast development. The protein is Thioredoxin-like protein CITRX, chloroplastic of Solanum lycopersicum (Tomato).